Here is a 274-residue protein sequence, read N- to C-terminus: Large ribosomal subunit protein uL2 (274 aa).

The segment at Val-223–Lys-274 is disordered.

It belongs to the universal ribosomal protein uL2 family. As to quaternary structure, part of the 50S ribosomal subunit. Forms a bridge to the 30S subunit in the 70S ribosome.

Functionally, one of the primary rRNA binding proteins. Required for association of the 30S and 50S subunits to form the 70S ribosome, for tRNA binding and peptide bond formation. It has been suggested to have peptidyltransferase activity; this is somewhat controversial. Makes several contacts with the 16S rRNA in the 70S ribosome. In Shewanella sp. (strain ANA-3), this protein is Large ribosomal subunit protein uL2.